A 258-amino-acid polypeptide reads, in one-letter code: Imidazole glycerol phosphate synthase subunit HisF (258 aa).

Residues Asp-11 and Asp-130 contribute to the active site.

The protein belongs to the HisA/HisF family. Heterodimer of HisH and HisF.

It localises to the cytoplasm. It catalyses the reaction 5-[(5-phospho-1-deoxy-D-ribulos-1-ylimino)methylamino]-1-(5-phospho-beta-D-ribosyl)imidazole-4-carboxamide + L-glutamine = D-erythro-1-(imidazol-4-yl)glycerol 3-phosphate + 5-amino-1-(5-phospho-beta-D-ribosyl)imidazole-4-carboxamide + L-glutamate + H(+). It participates in amino-acid biosynthesis; L-histidine biosynthesis; L-histidine from 5-phospho-alpha-D-ribose 1-diphosphate: step 5/9. Its function is as follows. IGPS catalyzes the conversion of PRFAR and glutamine to IGP, AICAR and glutamate. The HisF subunit catalyzes the cyclization activity that produces IGP and AICAR from PRFAR using the ammonia provided by the HisH subunit. This is Imidazole glycerol phosphate synthase subunit HisF from Lachnoclostridium phytofermentans (strain ATCC 700394 / DSM 18823 / ISDg) (Clostridium phytofermentans).